Consider the following 527-residue polypeptide: ATP synthase subunit alpha (527 aa).

An ATP-binding site is contributed by 172 to 179 (GDRQTGKT).

This sequence belongs to the ATPase alpha/beta chains family. As to quaternary structure, F-type ATPases have 2 components, CF(1) - the catalytic core - and CF(0) - the membrane proton channel. CF(1) has five subunits: alpha(3), beta(3), gamma(1), delta(1), epsilon(1). CF(0) has three main subunits: a(1), b(2) and c(9-12). The alpha and beta chains form an alternating ring which encloses part of the gamma chain. CF(1) is attached to CF(0) by a central stalk formed by the gamma and epsilon chains, while a peripheral stalk is formed by the delta and b chains.

Its subcellular location is the cell inner membrane. The catalysed reaction is ATP + H2O + 4 H(+)(in) = ADP + phosphate + 5 H(+)(out). In terms of biological role, produces ATP from ADP in the presence of a proton gradient across the membrane. The alpha chain is a regulatory subunit. The sequence is that of ATP synthase subunit alpha from Bacteroides fragilis (strain ATCC 25285 / DSM 2151 / CCUG 4856 / JCM 11019 / LMG 10263 / NCTC 9343 / Onslow / VPI 2553 / EN-2).